The sequence spans 96 residues: Co-chaperonin GroES (96 aa).

It belongs to the GroES chaperonin family. In terms of assembly, heptamer of 7 subunits arranged in a ring. Interacts with the chaperonin GroEL.

The protein localises to the cytoplasm. Together with the chaperonin GroEL, plays an essential role in assisting protein folding. The GroEL-GroES system forms a nano-cage that allows encapsulation of the non-native substrate proteins and provides a physical environment optimized to promote and accelerate protein folding. GroES binds to the apical surface of the GroEL ring, thereby capping the opening of the GroEL channel. This Hyphomonas neptunium (strain ATCC 15444) protein is Co-chaperonin GroES.